A 95-amino-acid chain; its full sequence is Small ribosomal subunit protein uS19 (95 aa).

Belongs to the universal ribosomal protein uS19 family.

In terms of biological role, protein S19 forms a complex with S13 that binds strongly to the 16S ribosomal RNA. The sequence is that of Small ribosomal subunit protein uS19 from Chloroflexus aggregans (strain MD-66 / DSM 9485).